The following is a 451-amino-acid chain: Kynureninase (451 aa).

Pyridoxal 5'-phosphate contacts are provided by residues L131, S132, 159 to 162 (FPSD), S215, D244, H247, and Y269. Residue K270 is modified to N6-(pyridoxal phosphate)lysine. Pyridoxal 5'-phosphate is bound by residues W303 and N331.

The protein belongs to the kynureninase family. As to quaternary structure, homodimer. Pyridoxal 5'-phosphate is required as a cofactor.

It localises to the cytoplasm. The catalysed reaction is L-kynurenine + H2O = anthranilate + L-alanine + H(+). It catalyses the reaction 3-hydroxy-L-kynurenine + H2O = 3-hydroxyanthranilate + L-alanine + H(+). It functions in the pathway amino-acid degradation; L-kynurenine degradation; L-alanine and anthranilate from L-kynurenine: step 1/1. Its pathway is cofactor biosynthesis; NAD(+) biosynthesis; quinolinate from L-kynurenine: step 2/3. Functionally, catalyzes the cleavage of L-kynurenine (L-Kyn) and L-3-hydroxykynurenine (L-3OHKyn) into anthranilic acid (AA) and 3-hydroxyanthranilic acid (3-OHAA), respectively. The polypeptide is Kynureninase (Dictyostelium discoideum (Social amoeba)).